The primary structure comprises 543 residues: CTP synthase (543 aa).

Residues 1 to 266 form an amidoligase domain region; that stretch reads MTKFIFVTGG…DDIICERFGI (266 aa). Residue S13 coordinates CTP. S13 serves as a coordination point for UTP. Residues 14 to 19 and D71 contribute to the ATP site; that span reads SLGKGI. Positions 71 and 140 each coordinate Mg(2+). Residues 147–149, 187–192, and K223 contribute to the CTP site; these read DIE and KTKPTQ. Residues 187 to 192 and K223 each bind UTP; that span reads KTKPTQ. The Glutamine amidotransferase type-1 domain maps to 291-543; it reads TVAIVGKYVE…VKAAIDHQNI (253 aa). Position 354 (G354) interacts with L-glutamine. The active-site Nucleophile; for glutamine hydrolysis is the C381. L-glutamine-binding positions include 382–385, E404, and R471; that span reads LGMQ. Catalysis depends on residues H516 and E518.

Belongs to the CTP synthase family. In terms of assembly, homotetramer.

The catalysed reaction is UTP + L-glutamine + ATP + H2O = CTP + L-glutamate + ADP + phosphate + 2 H(+). It carries out the reaction L-glutamine + H2O = L-glutamate + NH4(+). The enzyme catalyses UTP + NH4(+) + ATP = CTP + ADP + phosphate + 2 H(+). Its pathway is pyrimidine metabolism; CTP biosynthesis via de novo pathway; CTP from UDP: step 2/2. Allosterically activated by GTP, when glutamine is the substrate; GTP has no effect on the reaction when ammonia is the substrate. The allosteric effector GTP functions by stabilizing the protein conformation that binds the tetrahedral intermediate(s) formed during glutamine hydrolysis. Inhibited by the product CTP, via allosteric rather than competitive inhibition. Catalyzes the ATP-dependent amination of UTP to CTP with either L-glutamine or ammonia as the source of nitrogen. Regulates intracellular CTP levels through interactions with the four ribonucleotide triphosphates. This Psychrobacter sp. (strain PRwf-1) protein is CTP synthase.